The chain runs to 418 residues: Alpha-1-antitrypsin (418 aa).

A signal peptide spans 1-24; the sequence is MPSSVSWGILLLAGLCCLVPVSLA. Ser38 bears the Phosphoserine mark. Asn70, Asn107, and Asn271 each carry an N-linked (GlcNAc...) asparagine glycan. The RCL stretch occupies residues 373–392; sequence GAMFLEAIPMSIPPEVKFNK. Ser383 is subject to Phosphoserine.

The protein belongs to the serpin family. In terms of assembly, interacts with CELA2A. Interacts with ERGIC3 and LMAN1/ERGIC53. Interacts with PRSS1/Trypsin. As to expression, plasma.

The protein resides in the secreted. Its function is as follows. Inhibitor of serine proteases. Its primary target is elastase, but it also has a moderate affinity for plasmin and thrombin. Inhibits trypsin, chymotrypsin and plasminogen activator. The polypeptide is Alpha-1-antitrypsin (SERPINA1) (Pongo abelii (Sumatran orangutan)).